Consider the following 289-residue polypeptide: Rhodopsin (289 aa).

Topologically, residues 1-7 (YLVNPAA) are extracellular. A helical transmembrane segment spans residues 8-32 (YAALGAYMFLLILIGFPVNFLTLYV). At 33–44 (TLEHKKLRTPLN) the chain is on the cytoplasmic side. Residues 45–67 (YILLNLAVADLFMVLGGFTTTMY) traverse the membrane as a helical segment. The Extracellular portion of the chain corresponds to 68-81 (TSMHGYFVLGRLGC). Cys81 and Cys158 are disulfide-bonded. A helical membrane pass occupies residues 82-104 (NLEGFFATLGGEIALWSLVVLAI). The 'Ionic lock' involved in activated form stabilization motif lies at 105 to 107 (ERW). Residues 105-123 (ERWIVVCKPISNFRFTEDH) lie on the Cytoplasmic side of the membrane. The chain crosses the membrane as a helical span at residues 124-144 (AIMGLAFSWVMALSCSVPPLV). Residues 145–173 (GWSRYIPEAMQCSCGVDYYTRAEGFNTES) lie on the Extracellular side of the membrane. A helical transmembrane segment spans residues 174–195 (FVLYMFTVHFLIPLSVIFFCYG). Residues 196–223 (RLLCAVKEAAAAQQESETTQRSEKEVSR) lie on the Cytoplasmic side of the membrane. Residues 224–245 (MVVLMVIGFLVCWLPYASTAWW) form a helical membrane-spanning segment. Residues 246-257 (IFCNQGSEFGPV) lie on the Extracellular side of the membrane. Residues 258–279 (FMTIPAFFAKSSAIYNPMIYIC) form a helical membrane-spanning segment. N6-(retinylidene)lysine is present on Lys267. The Cytoplasmic segment spans residues 280-289 (MNKQFRHCMI).

The protein belongs to the G-protein coupled receptor 1 family. Opsin subfamily. In terms of processing, phosphorylated on some or all of the serine and threonine residues present in the C-terminal region. Post-translationally, contains one covalently linked retinal chromophore.

The protein resides in the membrane. Its subcellular location is the cell projection. It localises to the cilium. It is found in the photoreceptor outer segment. Its function is as follows. Photoreceptor required for image-forming vision at low light intensity. While most salt water fish species use retinal as chromophore, most freshwater fish use 3-dehydroretinal, or a mixture of retinal and 3-dehydroretinal. Light-induced isomerization of 11-cis to all-trans retinal triggers a conformational change that activates signaling via G-proteins. Subsequent receptor phosphorylation mediates displacement of the bound G-protein alpha subunit by arrestin and terminates signaling. The protein is Rhodopsin (rho) of Comephorus dybowskii.